A 501-amino-acid polypeptide reads, in one-letter code: Lysine--tRNA ligase (501 aa).

Mg(2+) is bound by residues E411 and E418.

It belongs to the class-II aminoacyl-tRNA synthetase family. In terms of assembly, homodimer. Requires Mg(2+) as cofactor.

The protein localises to the cytoplasm. It catalyses the reaction tRNA(Lys) + L-lysine + ATP = L-lysyl-tRNA(Lys) + AMP + diphosphate. The protein is Lysine--tRNA ligase of Thiobacillus denitrificans (strain ATCC 25259 / T1).